Consider the following 581-residue polypeptide: ATP-dependent lipid A-core flippase (581 aa).

5 helical membrane-spanning segments follow: residues 27–47 (VFLAVIGMVGTAATEPVFPAI), 63–83 (MVWLIPMGIVTLFLVRSVIVY), 154–174 (IALIGYLLYLDWKLTLITLAI), 251–271 (MTPITHIAASVAVAIIAFLAL), and 279–299 (GASAGSFISFITAMLMLISPV). One can recognise an ABC transmembrane type-1 domain in the interval 28–311 (FLAVIGMVGT…LATVNPTIQR (284 aa)). An ABC transporter domain is found at 343 to 579 (ICFDNVSLRY…GSYYANLSRL (237 aa)). Position 377–384 (377–384 (GASGGGKS)) interacts with ATP.

It belongs to the ABC transporter superfamily. Lipid exporter (TC 3.A.1.106) family. As to quaternary structure, homodimer.

It is found in the cell inner membrane. The enzyme catalyses ATP + H2O + lipid A-core oligosaccharideSide 1 = ADP + phosphate + lipid A-core oligosaccharideSide 2.. Functionally, involved in lipopolysaccharide (LPS) biosynthesis. Translocates lipid A-core from the inner to the outer leaflet of the inner membrane. Transmembrane domains (TMD) form a pore in the inner membrane and the ATP-binding domain (NBD) is responsible for energy generation. This is ATP-dependent lipid A-core flippase from Albidiferax ferrireducens (strain ATCC BAA-621 / DSM 15236 / T118) (Rhodoferax ferrireducens).